Here is a 379-residue protein sequence, read N- to C-terminus: tRNA-specific 2-thiouridylase MnmA (379 aa).

Residues 9–16 and Met35 contribute to the ATP site; that span reads AMSGGVDS. The segment at 94–96 is interaction with target base in tRNA; that stretch reads NPD. Cys99 serves as the catalytic Nucleophile. A disulfide bridge connects residues Cys99 and Cys195. Gly123 is a binding site for ATP. Residues 145-147 are interaction with tRNA; that stretch reads KDQ. The Cysteine persulfide intermediate role is filled by Cys195. Positions 307–308 are interaction with tRNA; the sequence is RY.

It belongs to the MnmA/TRMU family.

It localises to the cytoplasm. The enzyme catalyses S-sulfanyl-L-cysteinyl-[protein] + uridine(34) in tRNA + AH2 + ATP = 2-thiouridine(34) in tRNA + L-cysteinyl-[protein] + A + AMP + diphosphate + H(+). Catalyzes the 2-thiolation of uridine at the wobble position (U34) of tRNA, leading to the formation of s(2)U34. In Xylella fastidiosa (strain M23), this protein is tRNA-specific 2-thiouridylase MnmA.